Consider the following 164-residue polypeptide: Lipoprotein signal peptidase (164 aa).

The next 4 membrane-spanning stretches (helical) occupy residues 2–22 (MSLLTGTGLRWMWLAVFAIVL), 40–60 (VVITPFFNLVHVYNTGAAFSF), 70–90 (WLFSGLAIVISGVLAVAMAKA), and 99–119 (LAYSLVIGGAIGNLIDRVVYG). Active-site residues include aspartate 123 and aspartate 142. Residues 138–158 (FNVADMAISCGAVFIILDGFI) traverse the membrane as a helical segment.

The protein belongs to the peptidase A8 family.

It localises to the cell inner membrane. The enzyme catalyses Release of signal peptides from bacterial membrane prolipoproteins. Hydrolyzes -Xaa-Yaa-Zaa-|-(S,diacylglyceryl)Cys-, in which Xaa is hydrophobic (preferably Leu), and Yaa (Ala or Ser) and Zaa (Gly or Ala) have small, neutral side chains.. It participates in protein modification; lipoprotein biosynthesis (signal peptide cleavage). In terms of biological role, this protein specifically catalyzes the removal of signal peptides from prolipoproteins. This is Lipoprotein signal peptidase from Tolumonas auensis (strain DSM 9187 / NBRC 110442 / TA 4).